Consider the following 146-residue polypeptide: Aminoglycoside N(6')-acetyltransferase type 1 (146 aa).

Residues 1-146 enclose the N-acetyltransferase domain; the sequence is MNIMPISESQ…RVVYFKKNIG (146 aa). Residues W22, H25, Y66, and E79 each contribute to the substrate site. Residue 81-83 participates in acetyl-CoA binding; that stretch reads IFV. D115 is a binding site for substrate. N120 is an acetyl-CoA binding site. E136 lines the substrate pocket.

Homodimer.

It catalyses the reaction kanamycin B + acetyl-CoA = N(6')-acetylkanamycin B + CoA + H(+). In terms of biological role, catalyzes the transfer of an acetyl group from acetyl-CoA to the 6'-amino group of aminoglycoside molecules conferring resistance to antibiotics containing the purpurosamine ring including amikacin, kanamycin, tobramycin and netilmicin. The chain is Aminoglycoside N(6')-acetyltransferase type 1 from Acinetobacter baumannii.